The following is a 288-amino-acid chain: uncharacterized protein (288 aa).

The region spanning 107-288 (KQIPTLIGPQ…LAIQLLASIA (182 aa)) is the ATP-grasp domain. Residues K145 and 178–188 (QQYIATSNSEA) contribute to the ATP site. Residues D248, E261, and N263 each contribute to the Mg(2+) site. Residues D248, E261, and N263 each coordinate Mn(2+).

This sequence belongs to the RimK family.

This is an uncharacterized protein from Mycoplasma pneumoniae (strain ATCC 29342 / M129 / Subtype 1) (Mycoplasmoides pneumoniae).